The chain runs to 212 residues: MTVGILGTKLGMTQIFDEAGRSVPITVVQAGPCPITQIKTPQTDGYTAIQVAYGEVREKNLSRPERGHLNKSQTPPMRHLREFRLEDVSAYQLGQAITVDIFSPGQLVDVRGTSIGRGFAGYQKRHNFKRGPMAHGSKNHRLPGSTGAGTTPGRVFPGKRMAGRMGNTAVTIRKLQVMRVDPERNLILIKGALPGKPGALVSITPAKVVGRK.

A disordered region spans residues 127–161 (NFKRGPMAHGSKNHRLPGSTGAGTTPGRVFPGKRM).

The protein belongs to the universal ribosomal protein uL3 family. As to quaternary structure, part of the 50S ribosomal subunit. Forms a cluster with proteins L14 and L19.

Functionally, one of the primary rRNA binding proteins, it binds directly near the 3'-end of the 23S rRNA, where it nucleates assembly of the 50S subunit. The polypeptide is Large ribosomal subunit protein uL3 (Thermosynechococcus vestitus (strain NIES-2133 / IAM M-273 / BP-1)).